The chain runs to 500 residues: Protein DETOXIFICATION 29 (500 aa).

Transmembrane regions (helical) follow at residues 67–87 (GAITQVFAGHISTIALAAVSV), 91–111 (VVAGFSFGIMLGMGSALETLC), 132–152 (VILNVTALILSLLYIFAAPIL), 161–181 (ISSAAGIFSIYMIPQIFAYAI), 197–217 (VMAVISAVALVIHVPLTWFVI), 227–247 (LAVVLNASWCFIDMAQLVYIF), 277–297 (AVMLCLEVWYFMAIILFAGYL), 302–322 (ISVAALSICMNILGWTAMIAI), 349–369 (LVAVITSTLIGFIVSMILLIF), 393–413 (ILALSIVINNVQPVLSGVAVG), 419–439 (VVAYVNIACYYVFGIPFGLLL), and 449–469 (GIWCGMLTGTVVQTIVLTWMI).

Belongs to the multi antimicrobial extrusion (MATE) (TC 2.A.66.1) family.

It localises to the vacuole membrane. This is Protein DETOXIFICATION 29 from Arabidopsis thaliana (Mouse-ear cress).